Reading from the N-terminus, the 419-residue chain is Carboxypeptidase A1 (419 aa).

An N-terminal signal peptide occupies residues 1-16; that stretch reads MRGLLVLSVLLGAVFG. A propeptide spans 17 to 110 (activation peptide); sequence KEDFVGHQVL…QEQMFAFRSR (94 aa). The Peptidase M14 domain maps to 121-414; that stretch reads TYHTLEEIYD…LALLTIMEHT (294 aa). 2 residues coordinate Zn(2+): H179 and E182. Substrate-binding positions include 179-182, R237, and 254-255; these read HSRE and NR. A disulfide bridge connects residues C248 and C271. H306 is a Zn(2+) binding site. Substrate is bound by residues 307–308 and Y358; that span reads SY. The active-site Proton donor/acceptor is E380.

Belongs to the peptidase M14 family. In terms of assembly, monomer. May form a complex with proelastase 2. Zn(2+) serves as cofactor.

Its subcellular location is the secreted. The catalysed reaction is Release of a C-terminal amino acid, but little or no action with -Asp, -Glu, -Arg, -Lys or -Pro.. It carries out the reaction leukotriene C4 + H2O = leukotriene F4 + glycine. Inhibited by interaction with the S.magnifica carboxypeptidase inhibitor SmCI. Its function is as follows. Carboxypeptidase that catalyzes the release of a C-terminal amino acid, but has little or no action with -Asp, -Glu, -Arg, -Lys or -Pro. Catalyzes the conversion of leukotriene C4 to leukotriene F4 via the hydrolysis of an amide bond. The sequence is that of Carboxypeptidase A1 from Homo sapiens (Human).